The primary structure comprises 162 residues: Cyanate hydratase (162 aa).

Catalysis depends on residues arginine 103, glutamate 106, and serine 129.

It belongs to the cyanase family.

It catalyses the reaction cyanate + hydrogencarbonate + 3 H(+) = NH4(+) + 2 CO2. Functionally, catalyzes the reaction of cyanate with bicarbonate to produce ammonia and carbon dioxide. The polypeptide is Cyanate hydratase (Pyrenophora tritici-repentis (strain Pt-1C-BFP) (Wheat tan spot fungus)).